The primary structure comprises 122 residues: Small ribosomal subunit protein uS13 (122 aa).

A disordered region spans residues 96–122 (LPVRGQRTKTNSRTRKGKRKTIAGKKK). A compositionally biased stretch (basic residues) spans 101-122 (QRTKTNSRTRKGKRKTIAGKKK).

It belongs to the universal ribosomal protein uS13 family. As to quaternary structure, part of the 30S ribosomal subunit. Forms a loose heterodimer with protein S19. Forms two bridges to the 50S subunit in the 70S ribosome.

Located at the top of the head of the 30S subunit, it contacts several helices of the 16S rRNA. In the 70S ribosome it contacts the 23S rRNA (bridge B1a) and protein L5 of the 50S subunit (bridge B1b), connecting the 2 subunits; these bridges are implicated in subunit movement. Contacts the tRNAs in the A and P-sites. This chain is Small ribosomal subunit protein uS13, found in Chlamydia trachomatis serovar L2 (strain ATCC VR-902B / DSM 19102 / 434/Bu).